A 221-amino-acid chain; its full sequence is Endo-1,4-beta-xylanase I (221 aa).

An N-terminal signal peptide occupies residues 1–30 (MVSFTSIITAAVAATGALAAPATDVSLVAR). The region spanning 31 to 219 (QNTPNGEGTH…STGNAQITVN (189 aa)) is the GH11 domain. Glu115 functions as the Nucleophile in the catalytic mechanism. Residues 126–157 (DPSSQSQNKGTVTSDGSSYKIAQSTRTNQPSI) form a disordered region. The Proton donor role is filled by Glu206.

It belongs to the glycosyl hydrolase 11 (cellulase G) family. In terms of processing, the N-terminus is blocked.

It localises to the secreted. The enzyme catalyses Endohydrolysis of (1-&gt;4)-beta-D-xylosidic linkages in xylans.. It functions in the pathway glycan degradation; xylan degradation. In terms of biological role, major xylan-degrading enzyme. Contributes to the hydrolysis of arabinoxylan, the major component of maize cell-walls. The sequence is that of Endo-1,4-beta-xylanase I (XYL1) from Cochliobolus carbonum (Maize leaf spot fungus).